The primary structure comprises 86 residues: Small ribosomal subunit protein uS15 (86 aa).

It belongs to the universal ribosomal protein uS15 family. As to quaternary structure, part of the 30S ribosomal subunit. Forms a bridge to the 50S subunit in the 70S ribosome, contacting the 23S rRNA.

Its function is as follows. One of the primary rRNA binding proteins, it binds directly to 16S rRNA where it helps nucleate assembly of the platform of the 30S subunit by binding and bridging several RNA helices of the 16S rRNA. In terms of biological role, forms an intersubunit bridge (bridge B4) with the 23S rRNA of the 50S subunit in the ribosome. This is Small ribosomal subunit protein uS15 from Ruthia magnifica subsp. Calyptogena magnifica.